Here is a 246-residue protein sequence, read N- to C-terminus: Ribosomal RNA small subunit methyltransferase J (246 aa).

Residues 115–116 (ER) and Asp169 contribute to the S-adenosyl-L-methionine site.

Belongs to the methyltransferase superfamily. RsmJ family.

The protein localises to the cytoplasm. The enzyme catalyses guanosine(1516) in 16S rRNA + S-adenosyl-L-methionine = N(2)-methylguanosine(1516) in 16S rRNA + S-adenosyl-L-homocysteine + H(+). In terms of biological role, specifically methylates the guanosine in position 1516 of 16S rRNA. This is Ribosomal RNA small subunit methyltransferase J from Buchnera aphidicola subsp. Acyrthosiphon pisum (strain Tuc7).